The chain runs to 348 residues: MSKQTLILLYGGRSAEREVSVLSAESVMRAVDYTKFFVKTYFISQTGQFIKTQEFSSRPTLTERLMTNDTIRLEQQIRPSDIYEEGAVVFPVLHGPMGEDGSIQGFLEVLKMPYVGTNILSSSVAMDKITTKRVLESAGIPQVAYTVYIEGQDLDRCLAETEAVLSYPVFVKPANMGSSVGISKAESEEELRAAILLALTYDSRILIEQGVLAREIEVGLLGNTDVKSTLPGEVVKNVDFYDYQAKYIDNEITMAIPAAIDESAMTSMRTYAETAFKAIGACGLSRCDFFLGQDGQIYLNELNTMPGFTQWSMYPLLWEHMGLSYAELIEELVRLAQEMFEKREGHLI.

The ATP-grasp domain maps to Lys132–Arg334. Glu162–Glu217 contributes to the ATP binding site. Mg(2+) contacts are provided by Asp288, Glu301, and Asn303.

This sequence belongs to the D-alanine--D-alanine ligase family. It depends on Mg(2+) as a cofactor. Mn(2+) serves as cofactor.

It is found in the cytoplasm. The catalysed reaction is 2 D-alanine + ATP = D-alanyl-D-alanine + ADP + phosphate + H(+). It participates in cell wall biogenesis; peptidoglycan biosynthesis. Its function is as follows. Cell wall formation. This chain is D-alanine--D-alanine ligase, found in Streptococcus equi subsp. equi (strain 4047).